A 141-amino-acid polypeptide reads, in one-letter code: Cholinesterase (141 aa).

Asn-39 carries N-linked (GlcNAc...) asparagine glycosylation. 49–50 (GG) lines the substrate pocket. Ser-131 functions as the Acyl-ester intermediate in the catalytic mechanism. Residue Ser-131 is modified to Phosphoserine.

Belongs to the type-B carboxylesterase/lipase family. As to quaternary structure, homotetramer; disulfide-linked. Dimer of dimers. Present in most cells except erythrocytes.

The protein localises to the secreted. It carries out the reaction an acylcholine + H2O = a carboxylate + choline + H(+). Its function is as follows. Esterase with broad substrate specificity. Contributes to the inactivation of the neurotransmitter acetylcholine. Can degrade neurotoxic organophosphate esters. The protein is Cholinesterase (BCHE) of Canis lupus familiaris (Dog).